We begin with the raw amino-acid sequence, 355 residues long: MGCTVSAEDKAAAERSKMIDKNLREDGEKAAREVKLLLLGAGESGKSTIVKQMKIIHEDGYSEEECRQYRAVVYSNTIQSIMAIVKAMGNLQIDFDDPSRADDARQLFALSCTAEEQGVLPEDLSCVIRRLWADNGVQACFGRSREYQLNDSAAYYLNDLERIAQSDYIPTQQDVLRTRVKTTGIVETHFTFKDLHFKMFDVGGQRSERKKWIHCFEGVTAIIFCVALSAYDLVLAEDEEMNRMHESMKLFDSICNNKWFTDTSIILFLNKKDLFEEKITHSPLTICFPEYTGANKYEEAASYIQSKFEDLNKRKDTKEIYTHFTCATDTKNVQFVFDAVTDVIIKNNLKDCGLF.

Gly-2 carries the N-myristoyl glycine lipid modification. Cys-3 carries the S-palmitoyl cysteine lipid modification. Residues 32-355 form the G-alpha domain; it reads REVKLLLLGA…KNNLKDCGLF (324 aa). The interval 35-48 is G1 motif; it reads KLLLLGAGESGKST. Residues 40–47, 176–182, 201–205, 270–273, and Ala-327 each bind GTP; these read GAGESGKS, LRTRVKT, DVGGQ, and NKKD. Residues Ser-47 and Thr-182 each coordinate Mg(2+). The segment at 174 to 182 is G2 motif; the sequence is DVLRTRVKT. The interval 197-206 is G3 motif; it reads FKMFDVGGQR. Residues 266 to 273 are G4 motif; sequence ILFLNKKD. The G5 motif stretch occupies residues 325–330; that stretch reads TCATDT.

It belongs to the G-alpha family. G(i/o/t/z) subfamily. As to quaternary structure, g proteins are composed of 3 units; alpha, beta and gamma. The alpha chain contains the guanine nucleotide binding site. In this context, interacts with GNB2. Interacts with UNC5B. Interacts with GPSM1. Interacts with RGS12 and RGS14. Interacts (inactive GDP-bound form) with NUCB1 (via GBA motif); the interaction leads to activation of GNAI3. Interacts (inactive GDP-bound form) with CCDC88C/DAPLE (via GBA motif). Interacts (inactive GDP-bound form) with CCDC8A/GIV (via GBA motif). Interacts with CXCR1 and CXCR2.

Its subcellular location is the cytoplasm. The protein localises to the cytoskeleton. It localises to the microtubule organizing center. The protein resides in the centrosome. It is found in the cell membrane. Its subcellular location is the membrane. In terms of biological role, guanine nucleotide-binding proteins (G proteins) are involved as modulators or transducers in various transmembrane signaling systems. The G(i) proteins are involved in hormonal regulation of adenylate cyclase: they inhibit the cyclase in response to beta-adrenergic stimuli. May play a role in cell division. The sequence is that of Guanine nucleotide-binding protein G(i) subunit alpha-2 (GNAI2) from Canis lupus familiaris (Dog).